The sequence spans 482 residues: Aspartyl/glutamyl-tRNA(Asn/Gln) amidotransferase subunit B (482 aa).

Belongs to the GatB/GatE family. GatB subfamily. In terms of assembly, heterotrimer of A, B and C subunits.

The enzyme catalyses L-glutamyl-tRNA(Gln) + L-glutamine + ATP + H2O = L-glutaminyl-tRNA(Gln) + L-glutamate + ADP + phosphate + H(+). It catalyses the reaction L-aspartyl-tRNA(Asn) + L-glutamine + ATP + H2O = L-asparaginyl-tRNA(Asn) + L-glutamate + ADP + phosphate + 2 H(+). Functionally, allows the formation of correctly charged Asn-tRNA(Asn) or Gln-tRNA(Gln) through the transamidation of misacylated Asp-tRNA(Asn) or Glu-tRNA(Gln) in organisms which lack either or both of asparaginyl-tRNA or glutaminyl-tRNA synthetases. The reaction takes place in the presence of glutamine and ATP through an activated phospho-Asp-tRNA(Asn) or phospho-Glu-tRNA(Gln). This Azotobacter vinelandii (strain DJ / ATCC BAA-1303) protein is Aspartyl/glutamyl-tRNA(Asn/Gln) amidotransferase subunit B.